The chain runs to 242 residues: DNA repair protein RecO (242 aa).

It belongs to the RecO family.

Functionally, involved in DNA repair and RecF pathway recombination. This chain is DNA repair protein RecO, found in Nitrosospira multiformis (strain ATCC 25196 / NCIMB 11849 / C 71).